Here is a 486-residue protein sequence, read N- to C-terminus: Glutamyl-tRNA(Gln) amidotransferase subunit A (486 aa).

Active-site charge relay system residues include Lys74 and Ser149. The active-site Acyl-ester intermediate is the Ser173.

This sequence belongs to the amidase family. GatA subfamily. Heterotrimer of A, B and C subunits.

It catalyses the reaction L-glutamyl-tRNA(Gln) + L-glutamine + ATP + H2O = L-glutaminyl-tRNA(Gln) + L-glutamate + ADP + phosphate + H(+). Allows the formation of correctly charged Gln-tRNA(Gln) through the transamidation of misacylated Glu-tRNA(Gln) in organisms which lack glutaminyl-tRNA synthetase. The reaction takes place in the presence of glutamine and ATP through an activated gamma-phospho-Glu-tRNA(Gln). The sequence is that of Glutamyl-tRNA(Gln) amidotransferase subunit A from Prochlorococcus marinus (strain NATL2A).